Here is a 296-residue protein sequence, read N- to C-terminus: Haloalkane dehalogenase (296 aa).

The AB hydrolase-1 domain occupies 31–155 (PILFQHGNPT…QDRDLFQAFR (125 aa)). Asparagine 38 is a chloride binding site. Residue aspartate 108 is the Nucleophile of the active site. Tryptophan 109 provides a ligand contact to chloride. Catalysis depends on glutamate 132, which acts as the Proton donor. Residue histidine 272 is the Proton acceptor of the active site.

This sequence belongs to the haloalkane dehalogenase family. Type 2 subfamily. Monomer.

Its subcellular location is the periplasm. It carries out the reaction 1-haloalkane + H2O = a halide anion + a primary alcohol + H(+). The enzyme catalyses (3R,6R)-1,3,4,6-tetrachlorocyclohexa-1,4-diene + 2 H2O = 2,5-dichlorocyclohexa-2,5-dien-1,4-diol + 2 chloride + 2 H(+). It functions in the pathway xenobiotic degradation; gamma-hexachlorocyclohexane degradation. Competitively inhibited by the key pollutants 1,2-dichloroethane (1,2-DCE) and 1,2-dichloropropane (1,2-DCP). In terms of biological role, catalyzes hydrolytic cleavage of carbon-halogen bonds in halogenated aliphatic compounds, leading to the formation of the corresponding primary alcohols, halide ions and protons. Has a broad substrate specificity since not only monochloroalkanes (C3 to C10) but also dichloroalkanes (&gt; C3), bromoalkanes, and chlorinated aliphatic alcohols are good substrates. Shows almost no activity with 1,2-dichloroethane, but very high activity with the brominated analog. Is involved in the degradation of the important environmental pollutant gamma-hexachlorocyclohexane (gamma-HCH or lindane) as it also catalyzes conversion of 1,3,4,6-tetrachloro-1,4-cyclohexadiene (1,4-TCDN) to 2,5-dichloro-2,5-cyclohexadiene-1,4-diol (2,5-DDOL) via the intermediate 2,4,5-trichloro-2,5-cyclohexadiene-1-ol (2,4,5-DNOL). This degradation pathway allows S.japonicum UT26 to grow on gamma-HCH as the sole source of carbon and energy. The protein is Haloalkane dehalogenase of Sphingobium indicum (strain DSM 16413 / CCM 7287 / MTCC 6362 / UT26 / NBRC 101211 / UT26S) (Sphingobium japonicum).